The sequence spans 325 residues: MLKAPRFWYQPRSLLGGILSPFSFLYQIIVRIRRGLYAVGLKKISKFPVPIVIVGNITVGGSGKTPFVIWLANELKNRGFRPGVVSRGYGGKANRFPQTVTENSDPLQVGDEAVLLMKKIDCPMVVCRDRGAAVKHLLRNFQCDVVIGDDGLQHYSLGRDLEIALLDDRHLGNGRCLPAGPLREPKSRLNTVDFVVPKQLRPNEIYQLKNPAKKIDFNELKELTVHAVAGIGNPGYFFKQLETLGANVIAHPFRDHYFYRSEDFNFDDDHLIILTEKDAIKCKQFDDERLFCFSVDAVVPDQFQNDFFRLISNIILRKQAQREGI.

58–65 contributes to the ATP binding site; it reads TVGGSGKT.

Belongs to the LpxK family.

It catalyses the reaction a lipid A disaccharide + ATP = a lipid IVA + ADP + H(+). It functions in the pathway glycolipid biosynthesis; lipid IV(A) biosynthesis; lipid IV(A) from (3R)-3-hydroxytetradecanoyl-[acyl-carrier-protein] and UDP-N-acetyl-alpha-D-glucosamine: step 6/6. Functionally, transfers the gamma-phosphate of ATP to the 4'-position of a tetraacyldisaccharide 1-phosphate intermediate (termed DS-1-P) to form tetraacyldisaccharide 1,4'-bis-phosphate (lipid IVA). The chain is Tetraacyldisaccharide 4'-kinase from Coxiella burnetii (strain Dugway 5J108-111).